The following is a 419-amino-acid chain: MDKFVIQGGVKLEGEVRISGAKNAALPLLAAMILADTPITLKNVPDLKDVRTLVKLIGGLGITMSYEGETVIANTSTLDNQFAPYELVKTMRASILVLGPLLARYGSAKVSLPGGCAIGSRPVDQHLKALEALGAQIEVEAGYVHAKVDGRLKGGEVIFDMVTVGGTENILTAAVLAEGVTTIRNAAREPEITDLALMLIKMGAKIEGLDTDTLVVTGVESLHGCEYSVVADRIETGSYLAAAAITGGKVKTTHTDPNLLESVLDKFEEMGAEVTRGEDWIELDMLGKRPKAVSFRTLPHPEFPTDMQAQIMAVNAIGRGFATISETIFENRFMHVPELARMGANIQVEGNDAVVTGVEKLSAAPVMATDLRASFSLVLAALAAEGETIIDRIYHIDRGYEDIEAKLQGLGAQIKRVSE.

22–23 (KN) lines the phosphoenolpyruvate pocket. Residue Arg-92 coordinates UDP-N-acetyl-alpha-D-glucosamine. Cys-116 functions as the Proton donor in the catalytic mechanism. The residue at position 116 (Cys-116) is a 2-(S-cysteinyl)pyruvic acid O-phosphothioketal. UDP-N-acetyl-alpha-D-glucosamine contacts are provided by residues 121–125 (RPVDQ), Asp-306, and Ile-328.

Belongs to the EPSP synthase family. MurA subfamily.

Its subcellular location is the cytoplasm. It catalyses the reaction phosphoenolpyruvate + UDP-N-acetyl-alpha-D-glucosamine = UDP-N-acetyl-3-O-(1-carboxyvinyl)-alpha-D-glucosamine + phosphate. It functions in the pathway cell wall biogenesis; peptidoglycan biosynthesis. Functionally, cell wall formation. Adds enolpyruvyl to UDP-N-acetylglucosamine. Target for the antibiotic phosphomycin. This chain is UDP-N-acetylglucosamine 1-carboxyvinyltransferase, found in Acinetobacter guillouiae (Acinetobacter genomosp. 11).